The primary structure comprises 153 residues: Type II secretion system core protein G (153 aa).

Positions 1-7 are cleaved as a propeptide — leader sequence; it reads MERRQRG. N-methylphenylalanine is present on Phe-8. The chain crosses the membrane as a helical span at residues 8–28; that stretch reads FTLLEIMVVIVILGVLASLVV. 2 disordered regions span residues 68-91 and 126-153; these read EQGL…PQDG and MPDT…NGNP. Residues 134 to 143 show a composition bias toward low complexity; the sequence is GNWNVGNGAH. The segment covering 144-153 has biased composition (gly residues); that stretch reads NNGGNGNGNP.

It belongs to the GSP G family. As to quaternary structure, type II secretion system is composed of four main components: the outer membrane complex, the inner membrane complex, the cytoplasmic secretion ATPase and the periplasm-spanning pseudopilus. Forms homomultimers. Post-translationally, cleaved by the prepilin peptidase. Methylated by prepilin peptidase at the amino group of the N-terminal phenylalanine once the leader sequence is cleaved.

The protein resides in the cell inner membrane. In terms of biological role, core component of the type II secretion system required for the energy-dependent secretion of extracellular factors such as proteases and toxins from the periplasm. Pseudopilin (pilin-like) protein that polymerizes to form the pseudopilus. Further polymerization triggers pseudopilus growth. This chain is Type II secretion system core protein G (outG), found in Dickeya chrysanthemi (Pectobacterium chrysanthemi).